Here is an 811-residue protein sequence, read N- to C-terminus: MYSTKTDKKWQQKWDQTNIYTFDEKKSSKKLYTLEMFSYPSGSNLHAGHWFNYAPVDSWARMKRMQGYNVFQPMGFDAFGLPAENYAIKTGIHPKDSTEKNIDTMEKQLKSMGAMFNWENEVVTCRPDYYKWNQWLFLQLYKHDLAYRKNAPVNWCPSCNTVLANEQVKEGECERCGTEVTKKDLTQWFFKITDYTEELLKDLDNIDWPEKTKAMQRHWMGKSTGTDVTFKVADSDIKFNVFTTRVDTLFGVTYVVISPENDLVDSVTKEEYKEEIEKYREAAKKQTDIERQSITREKTGVSTGSYAINPINGRKVPIWIGDYVLNTYGTGAVMAVPAHDERDFEFATKYKLPIERVIEGGSSLPYVEYGKMINSDKFNGLYTPEGKEAVTKELENIGLGSGKTNYRLRDWLVSRQRYWGTPIPIIYCKKCGTVPVPESDLPVELPYNVQFSPDGKSPLLKSEEFMNTTCPICGEPAKREADTLDTFVCSSWYYLRYADNKNTEKAFDKDKINKLLPVDMYVGGPEHACMHLLYARFITKALRDMGFLNFDEPFLSLRHQGLILGPDGQKMSKSKGNTISPDDCIQKYGSDVFRMYLMFGFDYAEGGAWNDDGIKSMSKFVDRIERIVGNIKELINSGKNFKNSMDAAEKELNYSRNYSIKSVSEDAGKFQFNTAIARIMEFTNSLYKYIQEDTKNISLLKDTILDFIKIIAPFAPHFAEEQWEVLGQKYSIFNEKWPEFDPKALVKEEVEIAIQINGKIKAKINIPTNLSDEQIKELSISNDNIKPLLEGKNIKKVIVVKGRLVNIVVKP.

Residues 38 to 49 (SYPSGSNLHAGH) carry the 'HIGH' region motif. Positions 570–574 (KMSKS) match the 'KMSKS' region motif. Residue lysine 573 coordinates ATP.

Belongs to the class-I aminoacyl-tRNA synthetase family.

It is found in the cytoplasm. It carries out the reaction tRNA(Leu) + L-leucine + ATP = L-leucyl-tRNA(Leu) + AMP + diphosphate. In Clostridium kluyveri (strain ATCC 8527 / DSM 555 / NBRC 12016 / NCIMB 10680 / K1), this protein is Leucine--tRNA ligase.